A 161-amino-acid chain; its full sequence is Cell division control protein 31 (161 aa).

4 EF-hand domains span residues 20 to 55 (EQKQ…LGFE), 56 to 91 (LPKR…KILK), 93 to 128 (DPLD…LGET), and 129 to 161 (LTDE…CTDS). Positions 33, 35, 37, and 44 each coordinate Ca(2+). Thr130 is subject to Phosphothreonine. Residues Asp142, Asp144, Asp146, Glu148, and Glu153 each coordinate Ca(2+).

It belongs to the centrin family. Component of the spindle pole body (SPB), acting as the connector of microtubule arrays in the cytoplasm and the nucleoplasm, is involved in nuclear positioning before chromosome segregation, SPB separation, spindle formation, chromosome segregation, nuclear migration into the bud, nuclear reorientation after cytokinesis and nuclear fusion during conjugation. The SPB half-bridge, which is tightly associated with the cytoplasmic side of the nuclear envelope and the SPB, is playing a key role as the starting structure for and in the initiation of SPB duplication in G1. At the SPB half-bridge CDC31 interacts with KAR1, MPS3 and SFI1. Interacts with KIC1. Interacts with VPS13. Associates with nuclear pore complexes (NPCs).

Its subcellular location is the nucleus envelope. The protein localises to the cytoplasm. It localises to the cytoskeleton. It is found in the microtubule organizing center. The protein resides in the spindle pole body. Functions as a component of the spindle pole body (SPB) half-bridge. At the SPB, it is recruited by KAR1 and MPS3 to the SPB half-bridge and involved in the initial steps of SPB duplication. Also involved in connection with the protein kinase KIC1 in the maintenance of cell morphology and integrity. May play a role in vesicle-mediated transport, in a VPS13-dependent manner. The chain is Cell division control protein 31 (CDC31) from Saccharomyces cerevisiae (strain ATCC 204508 / S288c) (Baker's yeast).